Here is a 128-residue protein sequence, read N- to C-terminus: Large ribosomal subunit protein mL51 (128 aa).

Residues 1–31 (MAGSLSWVAGRRLWGLVPLACRSFFLGVPRL) constitute a mitochondrion transit peptide.

This sequence belongs to the mitochondrion-specific ribosomal protein mL51 family. Component of the mitochondrial ribosome large subunit (39S) which comprises a 16S rRNA and about 50 distinct proteins. Interacts with OXA1L.

It is found in the mitochondrion. The sequence is that of Large ribosomal subunit protein mL51 (MRPL51) from Bos taurus (Bovine).